The primary structure comprises 187 residues: Protein GrpE (187 aa).

Positions Met-1–Thr-23 are disordered.

The protein belongs to the GrpE family. As to quaternary structure, homodimer.

The protein resides in the cytoplasm. Functionally, participates actively in the response to hyperosmotic and heat shock by preventing the aggregation of stress-denatured proteins, in association with DnaK and GrpE. It is the nucleotide exchange factor for DnaK and may function as a thermosensor. Unfolded proteins bind initially to DnaJ; upon interaction with the DnaJ-bound protein, DnaK hydrolyzes its bound ATP, resulting in the formation of a stable complex. GrpE releases ADP from DnaK; ATP binding to DnaK triggers the release of the substrate protein, thus completing the reaction cycle. Several rounds of ATP-dependent interactions between DnaJ, DnaK and GrpE are required for fully efficient folding. The sequence is that of Protein GrpE from Mesoplasma florum (strain ATCC 33453 / NBRC 100688 / NCTC 11704 / L1) (Acholeplasma florum).